The primary structure comprises 69 residues: MFGLGTMEMVIILVIVLVIFGAGKLPKVMGDMGRGVKSFKKAMNAEDDAPAEPEVSKPAAAESTEKKDA.

The helical transmembrane segment at 1 to 21 threads the bilayer; the sequence is MFGLGTMEMVIILVIVLVIFG. The tract at residues 44 to 69 is disordered; it reads NAEDDAPAEPEVSKPAAAESTEKKDA.

It belongs to the TatA/E family. In terms of assembly, the Tat system comprises two distinct complexes: a TatABC complex, containing multiple copies of TatA, TatB and TatC subunits, and a separate TatA complex, containing only TatA subunits. Substrates initially bind to the TatABC complex, which probably triggers association of the separate TatA complex to form the active translocon.

It is found in the cell inner membrane. Its function is as follows. Part of the twin-arginine translocation (Tat) system that transports large folded proteins containing a characteristic twin-arginine motif in their signal peptide across membranes. TatA could form the protein-conducting channel of the Tat system. In Magnetococcus marinus (strain ATCC BAA-1437 / JCM 17883 / MC-1), this protein is Sec-independent protein translocase protein TatA.